Here is a 320-residue protein sequence, read N- to C-terminus: uncharacterized protein (320 aa).

Belongs to the NAD(P)-dependent epimerase/dehydratase family.

This is an uncharacterized protein from Staphylococcus saprophyticus subsp. saprophyticus (strain ATCC 15305 / DSM 20229 / NCIMB 8711 / NCTC 7292 / S-41).